The sequence spans 264 residues: Fibroblast growth factor 5 (264 aa).

A signal peptide spans 1-20 (MSLSLLFLIFCSHLIHSAWA). The disordered stretch occupies residues 25–81 (RLTPEGQPAPPRNPGDSSGSRGRSSATFSSSSASSPVAASPGSQGSGSEHSSFQWSP). Positions 38-72 (PGDSSGSRGRSSATFSSSSASSPVAASPGSQGSGS) are enriched in low complexity. Asn-108 carries an N-linked (GlcNAc...) asparagine glycan. A disordered region spans residues 227–254 (FTVTVPEKKKPPVKPKVPLSQPRRSPSP).

This sequence belongs to the heparin-binding growth factors family. As to quaternary structure, interacts with FGFR1 and FGFR2. Affinity between fibroblast growth factors (FGFs) and their receptors is increased by heparan sulfate glycosaminoglycans that function as coreceptors.

It is found in the secreted. Functionally, plays an important role in the regulation of cell proliferation and cell differentiation. Required for normal regulation of the hair growth cycle. Functions as an inhibitor of hair elongation by promoting progression from anagen, the growth phase of the hair follicle, into catagen the apoptosis-induced regression phase. The chain is Fibroblast growth factor 5 (Fgf5) from Mus musculus (Mouse).